The following is a 1097-amino-acid chain: DNA-directed RNA polymerase subunit beta (1097 aa).

Positions 1072–1097 are disordered; sequence QDVNPRRSTPSRPTYESLGVADYDED.

It belongs to the RNA polymerase beta chain family. In cyanobacteria the RNAP catalytic core is composed of 2 alpha, 1 beta, 1 beta', 1 gamma and 1 omega subunit. When a sigma factor is associated with the core the holoenzyme is formed, which can initiate transcription.

The enzyme catalyses RNA(n) + a ribonucleoside 5'-triphosphate = RNA(n+1) + diphosphate. Its function is as follows. DNA-dependent RNA polymerase catalyzes the transcription of DNA into RNA using the four ribonucleoside triphosphates as substrates. The chain is DNA-directed RNA polymerase subunit beta from Parasynechococcus marenigrum (strain WH8102).